The sequence spans 560 residues: Dihydroxy-acid dehydratase (560 aa).

C52 lines the [2Fe-2S] cluster pocket. Residue D84 coordinates Mg(2+). C125 provides a ligand contact to [2Fe-2S] cluster. Mg(2+) is bound by residues D126 and K127. K127 is modified (N6-carboxylysine). C197 provides a ligand contact to [2Fe-2S] cluster. Residue E448 coordinates Mg(2+). S474 acts as the Proton acceptor in catalysis.

The protein belongs to the IlvD/Edd family. Homodimer. The cofactor is [2Fe-2S] cluster. It depends on Mg(2+) as a cofactor.

It carries out the reaction (2R)-2,3-dihydroxy-3-methylbutanoate = 3-methyl-2-oxobutanoate + H2O. It catalyses the reaction (2R,3R)-2,3-dihydroxy-3-methylpentanoate = (S)-3-methyl-2-oxopentanoate + H2O. It participates in amino-acid biosynthesis; L-isoleucine biosynthesis; L-isoleucine from 2-oxobutanoate: step 3/4. It functions in the pathway amino-acid biosynthesis; L-valine biosynthesis; L-valine from pyruvate: step 3/4. Its function is as follows. Functions in the biosynthesis of branched-chain amino acids. Catalyzes the dehydration of (2R,3R)-2,3-dihydroxy-3-methylpentanoate (2,3-dihydroxy-3-methylvalerate) into 2-oxo-3-methylpentanoate (2-oxo-3-methylvalerate) and of (2R)-2,3-dihydroxy-3-methylbutanoate (2,3-dihydroxyisovalerate) into 2-oxo-3-methylbutanoate (2-oxoisovalerate), the penultimate precursor to L-isoleucine and L-valine, respectively. This chain is Dihydroxy-acid dehydratase, found in Francisella tularensis subsp. tularensis (strain WY96-3418).